The primary structure comprises 63 residues: Beta-defensin 35 (63 aa).

The signal sequence occupies residues 1-23 (MPQTFFVFCFLFFVFLQLFPGTG). 3 cysteine pairs are disulfide-bonded: Cys-31–Cys-58, Cys-38–Cys-52, and Cys-42–Cys-59.

Belongs to the beta-defensin family. Expressed in testis, epididymis (caput, corpus and cauda), kidney and neonatal and adult brain.

It localises to the secreted. In terms of biological role, has antibacterial activity. This Mus musculus (Mouse) protein is Beta-defensin 35 (Defb35).